Reading from the N-terminus, the 628-residue chain is ATP-binding cassette sub-family F member 2 (628 aa).

Residues 1 to 57 (MPSDLAKKKAAKKKEAAKARQRPRKGHEENGDAVTEPQVAEEKIEEANGRETTGDGE) form a disordered region. The span at 40–53 (AEEKIEEANGRETT) shows a compositional bias: basic and acidic residues. ABC transporter domains lie at 91–330 (VHII…ENQM) and 401–618 (IMVQ…VDEE). 123–130 (GLNGIGKS) contacts ATP. Thr-223 bears the Phosphothreonine mark. Residue Lys-309 is modified to N6-acetyllysine. 435–442 (GPNGAGKS) provides a ligand contact to ATP. A Phosphoserine modification is found at Ser-517.

Belongs to the ABC transporter superfamily. ABCF family. EF3 subfamily.

The sequence is that of ATP-binding cassette sub-family F member 2 from Mus musculus (Mouse).